We begin with the raw amino-acid sequence, 306 residues long: Arylesterase (306 aa).

An Involved in the stabilization of the negatively charged intermediate by the formation of the oxyanion hole motif is present at residues 82–84 (HGG). Catalysis depends on residues Ser-156, Asp-251, and His-281.

Monomer.

It carries out the reaction a phenyl acetate + H2O = a phenol + acetate + H(+). The catalysed reaction is An aryl dialkyl phosphate + H2O = dialkyl phosphate + an aryl alcohol.. Completely inhibited by chemical modifiers that are specific to Cys (HgCl(2) and p-chloromercuribenzoic acid), His (diethyl pyrocarbonate) and Ser (diisopropyl fluorophosphate and phenylmethanesulfonyl fluoride). No significant effect with chemical modifiers specific to Lys (pyridoxal 5'-phosphate) and Arg (phenylglyoxal). Not inhibited by inhibitors of A-esterases (paraoxon) or C-esterases (physostigmine/eserine). Activity is also not effected by incubation with 5 mM divalent cations for 30 minutes at 30 degrees Celsius or with 10 mM EDTA for 60 minutes at 75 degrees Celsius. Its function is as follows. Has a broad substrate specificity. Hydrolyzes various p-nitrophenyl phosphates, aromatic esters and p-nitrophenyl fatty acids in vitro. Most active against paraoxon, phenyl acetate and p-nitrophenyl caproate (C6), respectively. Also has tributyrinase activity, but shows no hydrolytic activity toward other triacylglycerols including tricaprylin, trimyristin, tripalmitin or triolein in vitro. This Saccharolobus solfataricus (Sulfolobus solfataricus) protein is Arylesterase.